A 245-amino-acid polypeptide reads, in one-letter code: MIIPAIDLIDGHVVRLYQGDYEQKTQYELDPVEVVHDYADQGATWLHIVDLTGAKDTSKRQLELIKSMVDTKRMQFQAGGGIRSEEEVAQLLETGVSRVVIGSLAVKQPELVKSWVEKYGPERIVLALDININESGEKLIATHGWQENSGVALEGLLEDFATVGAKHVLCTDISRDGTLQGANTELYQEMAARFPNVSWQASGGIGSINDIEALKPTNVGGVILGRALLEGKFTVKEAIACWQSA.

Asp7 acts as the Proton acceptor in catalysis. Residue Asp129 is the Proton donor of the active site.

Belongs to the HisA/HisF family.

It is found in the cytoplasm. The catalysed reaction is 1-(5-phospho-beta-D-ribosyl)-5-[(5-phospho-beta-D-ribosylamino)methylideneamino]imidazole-4-carboxamide = 5-[(5-phospho-1-deoxy-D-ribulos-1-ylimino)methylamino]-1-(5-phospho-beta-D-ribosyl)imidazole-4-carboxamide. It participates in amino-acid biosynthesis; L-histidine biosynthesis; L-histidine from 5-phospho-alpha-D-ribose 1-diphosphate: step 4/9. This Alteromonas mediterranea (strain DSM 17117 / CIP 110805 / LMG 28347 / Deep ecotype) protein is 1-(5-phosphoribosyl)-5-[(5-phosphoribosylamino)methylideneamino] imidazole-4-carboxamide isomerase.